The following is a 562-amino-acid chain: Membrane protein insertase YidC (562 aa).

The helical transmembrane segment at 1–21 threads the bilayer; it reads MDIKRTILIVALAIVTYVGVL. The segment at 42-74 is disordered; sequence TAPGIPDTAAGNNGSASADVPSATGNTTSAAPL. Helical transmembrane passes span 343–363, 369–389, 439–459, 470–490, and 517–537; these read LELT…FWLL, ILGN…GLFF, LGGC…YWVL, WILW…PIIM, and PIIF…YWVV.

This sequence belongs to the OXA1/ALB3/YidC family. Type 1 subfamily. Interacts with the Sec translocase complex via SecD. Specifically interacts with transmembrane segments of nascent integral membrane proteins during membrane integration.

It is found in the cell inner membrane. Required for the insertion and/or proper folding and/or complex formation of integral membrane proteins into the membrane. Involved in integration of membrane proteins that insert both dependently and independently of the Sec translocase complex, as well as at least some lipoproteins. Aids folding of multispanning membrane proteins. The sequence is that of Membrane protein insertase YidC from Pseudomonas syringae pv. tomato (strain ATCC BAA-871 / DC3000).